The sequence spans 298 residues: Tyrosine recombinase XerC (298 aa).

Residues 1-84 (MNHIQEAFLN…TLRTLYEYWM (84 aa)) enclose the Core-binding (CB) domain. The region spanning 105-286 (YLPQFSLEEE…SNQQLRKVYL (182 aa)) is the Tyr recombinase domain. Active-site residues include Arg145, Lys169, His238, Arg241, and His264. The active-site O-(3'-phospho-DNA)-tyrosine intermediate is the Tyr273.

This sequence belongs to the 'phage' integrase family. XerC subfamily. As to quaternary structure, forms a cyclic heterotetrameric complex composed of two molecules of XerC and two molecules of XerD.

It is found in the cytoplasm. Functionally, site-specific tyrosine recombinase, which acts by catalyzing the cutting and rejoining of the recombining DNA molecules. The XerC-XerD complex is essential to convert dimers of the bacterial chromosome into monomers to permit their segregation at cell division. It also contributes to the segregational stability of plasmids. The chain is Tyrosine recombinase XerC from Staphylococcus aureus.